The sequence spans 376 residues: Serpin B6 (376 aa).

An N-acetylmethionine modification is found at Met1. At Ser151 the chain carries Phosphoserine. Lys195 bears the N6-acetyllysine mark.

It belongs to the serpin family. Ov-serpin subfamily. In terms of assembly, forms a complex with the monomeric form of beta-tryptase.

It is found in the cytoplasm. Its function is as follows. Inhibitor of cathepsin G, kallikrein-8 and thrombin. May play an important role in the inner ear in the protection against leakage of lysosomal content during stress. May be involved in the regulation of serine proteinases present in the brain or extravasated from the blood. The polypeptide is Serpin B6 (SERPINB6) (Macaca fascicularis (Crab-eating macaque)).